A 311-amino-acid chain; its full sequence is Dehydrogenase/reductase SDR family member 7C (311 aa).

A signal peptide spans 1–18; the sequence is MGFLTFLIVPLLILGISG. 41–65 contributes to the NAD(+) binding site; sequence VITDAISGLGKECSRVFHSAGARLV. Thr-178 provides a ligand contact to substrate. Catalysis depends on Tyr-191, which acts as the Proton acceptor.

The protein belongs to the short-chain dehydrogenases/reductases (SDR) family.

It localises to the secreted. In terms of biological role, putative oxidoreductase. The sequence is that of Dehydrogenase/reductase SDR family member 7C (dhrs7c) from Xenopus tropicalis (Western clawed frog).